The following is a 235-amino-acid chain: Sugar fermentation stimulation protein homolog (235 aa).

This sequence belongs to the SfsA family.

The chain is Sugar fermentation stimulation protein homolog from Roseobacter denitrificans (strain ATCC 33942 / OCh 114) (Erythrobacter sp. (strain OCh 114)).